Reading from the N-terminus, the 482-residue chain is Glycogen synthase (482 aa).

Position 21 (Lys21) interacts with ADP-alpha-D-glucose.

This sequence belongs to the glycosyltransferase 1 family. Bacterial/plant glycogen synthase subfamily.

The enzyme catalyses [(1-&gt;4)-alpha-D-glucosyl](n) + ADP-alpha-D-glucose = [(1-&gt;4)-alpha-D-glucosyl](n+1) + ADP + H(+). It functions in the pathway glycan biosynthesis; glycogen biosynthesis. Functionally, synthesizes alpha-1,4-glucan chains using ADP-glucose. The polypeptide is Glycogen synthase (Clostridium perfringens (strain 13 / Type A)).